The sequence spans 68 residues: Large ribosomal subunit protein uL29 (68 aa).

Belongs to the universal ribosomal protein uL29 family.

This chain is Large ribosomal subunit protein uL29, found in Methanobrevibacter smithii (strain ATCC 35061 / DSM 861 / OCM 144 / PS).